A 340-amino-acid polypeptide reads, in one-letter code: Eukaryotic translation initiation factor 3 subunit I (340 aa).

5 WD repeats span residues 8 to 47 (GHER…RLGT), 50 to 91 (GHQG…KVWD), 150 to 189 (CTES…QLEN), 194 to 233 (EFDH…ILKT), and 291 to 330 (GHFG…FDFM).

This sequence belongs to the eIF-3 subunit I family. Component of the eukaryotic translation initiation factor 3 (eIF-3) complex.

The protein localises to the cytoplasm. Component of the eukaryotic translation initiation factor 3 (eIF-3) complex, which is involved in protein synthesis of a specialized repertoire of mRNAs and, together with other initiation factors, stimulates binding of mRNA and methionyl-tRNAi to the 40S ribosome. The eIF-3 complex specifically targets and initiates translation of a subset of mRNAs involved in cell proliferation. The polypeptide is Eukaryotic translation initiation factor 3 subunit I (tif34) (Neosartorya fischeri (strain ATCC 1020 / DSM 3700 / CBS 544.65 / FGSC A1164 / JCM 1740 / NRRL 181 / WB 181) (Aspergillus fischerianus)).